The primary structure comprises 634 residues: Threonine--tRNA ligase (634 aa).

Residues 1-61 form the TGS domain; sequence MISLKFPNNE…SESGEFRLYT (61 aa). The interval 242-532 is catalytic; sequence DHRKIGQELD…LIEHYAGAFP (291 aa). Residues Cys333, His384, and His509 each coordinate Zn(2+).

This sequence belongs to the class-II aminoacyl-tRNA synthetase family. As to quaternary structure, homodimer. It depends on Zn(2+) as a cofactor.

It is found in the cytoplasm. The enzyme catalyses tRNA(Thr) + L-threonine + ATP = L-threonyl-tRNA(Thr) + AMP + diphosphate + H(+). Its function is as follows. Catalyzes the attachment of threonine to tRNA(Thr) in a two-step reaction: L-threonine is first activated by ATP to form Thr-AMP and then transferred to the acceptor end of tRNA(Thr). Also edits incorrectly charged L-seryl-tRNA(Thr). This is Threonine--tRNA ligase from Carboxydothermus hydrogenoformans (strain ATCC BAA-161 / DSM 6008 / Z-2901).